The following is a 278-amino-acid chain: ATP synthase subunit a (278 aa).

Helical transmembrane passes span 41–61, 108–128, 149–168, 180–200, 222–242, and 244–264; these read FLNI…LLFF, LTIF…VDFV, INIT…YFGI, FFFQ…LELI, LIFI…LSVP, and AIFH…LTII.

The protein belongs to the ATPase A chain family. F-type ATPases have 2 components, CF(1) - the catalytic core - and CF(0) - the membrane proton channel. CF(1) has five subunits: alpha(3), beta(3), gamma(1), delta(1), epsilon(1). CF(0) has three main subunits: a(1), b(2) and c(9-12). The alpha and beta chains form an alternating ring which encloses part of the gamma chain. CF(1) is attached to CF(0) by a central stalk formed by the gamma and epsilon chains, while a peripheral stalk is formed by the delta and b chains.

It is found in the cell membrane. Functionally, key component of the proton channel; it plays a direct role in the translocation of protons across the membrane. The protein is ATP synthase subunit a of Wigglesworthia glossinidia brevipalpis.